A 614-amino-acid polypeptide reads, in one-letter code: Inactive leucine-rich repeat receptor-like serine/threonine-protein kinase At5g24100 (614 aa).

An N-terminal signal peptide occupies residues 1-21; sequence MSRGRSFIFYFVLFLFFGSSA. Residues 22–251 are Extracellular-facing; it reads LYSQVTGDLA…KNGIYISEPA (230 aa). Asn-53 carries an N-linked (GlcNAc...) asparagine glycan. LRR repeat units follow at residues 71 to 95, 96 to 120, 121 to 146, 148 to 167, 168 to 190, and 191 to 214; these read GTRV…TISR, LSEL…FLQL, KKLK…TWTN, TVLD…GFAN, LTGL…DLNL, and PGLR…LKRF. Residues Asn-146, Asn-158, and Asn-167 are each glycosylated (N-linked (GlcNAc...) asparagine). N-linked (GlcNAc...) asparagine glycosylation is found at Asn-197 and Asn-202. The chain crosses the membrane as a helical span at residues 252-272; the sequence is ILGIAISVCFVIFFVIAVVII. The Cytoplasmic segment spans residues 273–614; that stretch reads VCYVKRQRKS…VETLEEIERD (342 aa). The Protein kinase domain occupies 341-611; sequence IASAEFLGKG…VKVVETLEEI (271 aa). At Ser-343 the chain carries Phosphoserine. Residues 347–355 and Lys-369 each bind ATP; that span reads LGKGVFGMT. Ser-420 is modified (phosphoserine). Phosphothreonine occurs at positions 441, 514, and 591. An LRR 7 repeat occupies 578-601; sequence AKLLQMLQLGTSCTAMVPAKRPDM.

Belongs to the protein kinase superfamily. Ser/Thr protein kinase family.

The protein localises to the cell membrane. The protein is Inactive leucine-rich repeat receptor-like serine/threonine-protein kinase At5g24100 of Arabidopsis thaliana (Mouse-ear cress).